The sequence spans 632 residues: 1-deoxy-D-xylulose-5-phosphate synthase (632 aa).

Thiamine diphosphate is bound by residues histidine 78 and 119–121; that span reads AHS. Aspartate 150 provides a ligand contact to Mg(2+). Residues 151-152, asparagine 179, tyrosine 286, and glutamate 368 each bind thiamine diphosphate; that span reads GA. Residue asparagine 179 participates in Mg(2+) binding.

This sequence belongs to the transketolase family. DXPS subfamily. In terms of assembly, homodimer. Mg(2+) serves as cofactor. Requires thiamine diphosphate as cofactor.

It carries out the reaction D-glyceraldehyde 3-phosphate + pyruvate + H(+) = 1-deoxy-D-xylulose 5-phosphate + CO2. It participates in metabolic intermediate biosynthesis; 1-deoxy-D-xylulose 5-phosphate biosynthesis; 1-deoxy-D-xylulose 5-phosphate from D-glyceraldehyde 3-phosphate and pyruvate: step 1/1. Catalyzes the acyloin condensation reaction between C atoms 2 and 3 of pyruvate and glyceraldehyde 3-phosphate to yield 1-deoxy-D-xylulose-5-phosphate (DXP). The polypeptide is 1-deoxy-D-xylulose-5-phosphate synthase (Albidiferax ferrireducens (strain ATCC BAA-621 / DSM 15236 / T118) (Rhodoferax ferrireducens)).